The sequence spans 371 residues: MAFKQLFAAITVALSLTAANAAVVKEKRATCANGKTVGDASCCAWFDVLDDIQANMFHGGQCGAEAHESIRLVFHDSIAISPAMEAKGKFGGGGADGSIMIFDTIETAFHPNIGLDEVVAMQKPFVQKHGVTPGDFIAFAGAVALSNCPGAPQMNFFTGRKPATQPAPDGLVPEPFHTVDQIIARVNDAGEFDELELVWMLSAHSVAAVNDVDPTVQGLPFDSTPGIFDSQFFVETQFRGTLFPGSGGNQGEVESGMAGEIRIQTDHTLARDSRTACEWQSFVGNQSKLVDDFQFIFLALTQLGQDPNAMTDCSDVIPLSKPIPGNGPFSFFPPGKSHSDIEQACAETPFPSLVTLPGPATSVARIPPHKA.

The first 21 residues, 1-21 (MAFKQLFAAITVALSLTAANA), serve as a signal peptide directing secretion. Residues 22-28 (AVVKEKR) constitute a propeptide that is removed on maturation. 4 cysteine pairs are disulfide-bonded: C31–C43, C42–C313, C62–C148, and C277–C345. The active-site Proton acceptor is the H75. Residues D76, G94, D96, and S98 each contribute to the Ca(2+) site. W199 carries the 3-hydroxytryptophan modification. Heme b is bound at residue H204. Ca(2+)-binding residues include S205, D222, T224, I227, and D229. N285 carries N-linked (GlcNAc...) asparagine glycosylation.

Belongs to the peroxidase family. Ligninase subfamily. Requires Ca(2+) as cofactor. It depends on heme b as a cofactor.

The enzyme catalyses 1-(3,4-dimethoxyphenyl)-2-(2-methoxyphenoxy)propane-1,3-diol + H2O2 = 3,4-dimethoxybenzaldehyde + guaiacol + glycolaldehyde + H2O. It carries out the reaction 2 (3,4-dimethoxyphenyl)methanol + H2O2 = 2 (3,4-dimethoxyphenyl)methanol radical + 2 H2O. It functions in the pathway secondary metabolite metabolism; lignin degradation. In terms of biological role, depolymerization of lignin. Catalyzes the C(alpha)-C(beta) cleavage of the propyl side chains of lignin. In Phanerodontia chrysosporium (White-rot fungus), this protein is Ligninase LG2 (GLG2).